Reading from the N-terminus, the 333-residue chain is T-cell surface glycoprotein CD1c (333 aa).

The first 17 residues, 1-17 (MLFLQFLLLALLLPGGD), serve as a signal peptide directing secretion. Over 18 to 302 (NADASQEHVS…ILYWGHHFSM (285 aa)) the chain is Extracellular. N-linked (GlcNAc...) asparagine glycans are attached at residues Asn38, Asn70, Asn75, and Asn146. Intrachain disulfides connect Cys120-Cys185 and Cys225-Cys280. The 91-residue stretch at 206–296 (PEAWLSSRPS…LGGQDIILYW (91 aa)) folds into the Ig-like domain. Residues 303–323 (NWIALVVIVPLVILIVLVLWF) traverse the membrane as a helical segment. The Cytoplasmic portion of the chain corresponds to 324-333 (KKHCSYQDIL). The Internalization signal signature appears at 329–332 (YQDI).

In terms of assembly, heterodimer with B2M (beta-2-microglobulin). In terms of tissue distribution, expressed on cortical thymocytes, on certain T-cell leukemias, and in various other tissues.

The protein localises to the cell membrane. It localises to the endosome membrane. The protein resides in the lysosome. In terms of biological role, antigen-presenting protein that binds self and non-self lipid and glycolipid antigens and presents them to T-cell receptors on natural killer T-cells. This is T-cell surface glycoprotein CD1c (CD1C) from Homo sapiens (Human).